Here is a 279-residue protein sequence, read N- to C-terminus: Undecaprenyl-diphosphatase (279 aa).

Transmembrane regions (helical) follow at residues 17 to 37, 46 to 66, 92 to 112, 123 to 143, 156 to 176, 197 to 217, 226 to 246, and 257 to 277; these read TEFL…FFPF, AFED…VVVL, FQFY…GFLL, SDLL…MVFV, IGFK…IPGV, AEFS…YKLY, ETIG…YFII, and SFIS…LYFV.

This sequence belongs to the UppP family.

It localises to the cell inner membrane. The catalysed reaction is di-trans,octa-cis-undecaprenyl diphosphate + H2O = di-trans,octa-cis-undecaprenyl phosphate + phosphate + H(+). Its function is as follows. Catalyzes the dephosphorylation of undecaprenyl diphosphate (UPP). Confers resistance to bacitracin. The polypeptide is Undecaprenyl-diphosphatase (Leptospira biflexa serovar Patoc (strain Patoc 1 / ATCC 23582 / Paris)).